Here is an 840-residue protein sequence, read N- to C-terminus: Subtilisin-like protease SBT2.3 (840 aa).

A signal peptide spans 1-27 (MVRVMLVRFGFLLLMISFVFLSNNTLG). A propeptide spans 28-146 (QQQDDDDDSA…IVLDYSVRTA (119 aa)) (activation peptide). The 109-residue stretch at 38–146 (VYIVTLKQPP…IVLDYSVRTA (109 aa)) folds into the Inhibitor I9 domain. A compositionally biased stretch (basic residues) spans 61-81 (KSKFTPKLRPRNNSRKRHGKS). Residues 61-85 (KSKFTPKLRPRNNSRKRHGKSKIPS) form a disordered region. The N-linked (GlcNAc...) asparagine glycan is linked to N72. The region spanning 148–694 (TYTPQFMGLP…SGFVNATAAL (547 aa)) is the Peptidase S8 domain. The active-site Charge relay system is the D180. Residues N193 and N241 are each glycosylated (N-linked (GlcNAc...) asparagine). The active-site Charge relay system is the H255. Residues N398, N427, N480, N525, and N553 are each glycosylated (N-linked (GlcNAc...) asparagine). A PA domain is found at 418–513 (MISAFHALNN…MDMPGIIIPS (96 aa)). The active-site Charge relay system is the S619. N689, N715, N723, N767, and N808 each carry an N-linked (GlcNAc...) asparagine glycan.

It belongs to the peptidase S8 family.

It localises to the secreted. The protein is Subtilisin-like protease SBT2.3 of Arabidopsis thaliana (Mouse-ear cress).